The following is a 277-amino-acid chain: Large ribosomal subunit protein uL2 (277 aa).

A disordered region spans residues 219 to 277 (TVRGSVMNPNDHPHGGGEGKAPVGRKAPSTPWGKPALGLKTRNKKAKSDKLIVRRRNEK). Positions 264 to 277 (AKSDKLIVRRRNEK) are enriched in basic and acidic residues.

This sequence belongs to the universal ribosomal protein uL2 family. Part of the 50S ribosomal subunit. Forms a bridge to the 30S subunit in the 70S ribosome.

In terms of biological role, one of the primary rRNA binding proteins. Required for association of the 30S and 50S subunits to form the 70S ribosome, for tRNA binding and peptide bond formation. It has been suggested to have peptidyltransferase activity; this is somewhat controversial. Makes several contacts with the 16S rRNA in the 70S ribosome. In Streptococcus sanguinis (strain SK36), this protein is Large ribosomal subunit protein uL2.